Here is a 500-residue protein sequence, read N- to C-terminus: Cytochrome P450 71D13 (500 aa).

The helical; Signal-anchor for type II membrane protein transmembrane segment at 3–23 threads the bilayer; that stretch reads LQISSAIIILVVTYTISLLII. Cys439 serves as a coordination point for heme.

This sequence belongs to the cytochrome P450 family. Requires heme as cofactor.

The protein localises to the endoplasmic reticulum membrane. It catalyses the reaction (4S)-limonene + reduced [NADPH--hemoprotein reductase] + O2 = (1S,6R)-isopiperitenol + oxidized [NADPH--hemoprotein reductase] + H2O + H(+). Hydroxylates (-)-(4S)-limonene to (-)-trans-isopiperitenol, a precursor of (-)-menthol, responsible for the cooling sensation of peppermint. This is Cytochrome P450 71D13 (CYP71D13) from Mentha piperita (Peppermint).